The primary structure comprises 625 residues: MMNESLTEKRNELSLSFAALGVVFGDIGTSPLYAFGQVIKYFPINDHNIYGILSLIFWSLIIIVSIKYLVIVFRADNDGEGGIIALAGVIRQKIKQPGGWLLFITLVGIGLIIGDGMLTPAISILSAVEGLESLSPNLAKYVLPVTLIILFFLFKMQSIGTGKIGVYFAPVMLVWFITIGILGFLQIIQNPKVLMAINPYYAINFFMIHKYFALFILGGVFLVMTGGEALFADLGHFGKKAIRTGWFAVALPALLLCYFGQGAFVLMHTEDIKYPFFSLSPDWFLPVMIILATLATIIASQAIISAAFSILKQASLLNLIPRLKIVFTSKFEKGEVYLPLINFILALGTCSLVVIFKSSSNLADAYGIAVNLDMLITTVLVGIIAYRCWSWHAFKILIFLLILIIELAFFAGNIPKLLTGGWIPILIAFLGFVVMYTWHCGFEKLRELHHRDALMDAFIIDELNQNKISRQPGMGLYIIDPYDCEGESLLHHLRLNRIFFENMVFVSIKIENKPYIPIEDKFELIKKAEGFYLIFIHYGFTENINLPNELDEMFKRVYLPFDIIKNKLIYFIEIVFVEMTGERQKHMYLWQKHFFSLMIRNAVPDIQFYQLPYNNTIAIGTYYQF.

12 helical membrane-spanning segments follow: residues 15–35 (LSFA…LYAF), 52–72 (ILSL…LVIV), 98–118 (GGWL…DGML), 134–154 (LSPN…FFLF), 164–184 (IGVY…ILGF), 212–232 (FALF…ALFA), 246–266 (WFAV…AFVL), 284–304 (FLPV…QAII), 336–356 (VYLP…VVIF), 365–385 (AYGI…GIIA), 394–414 (FKIL…AGNI), and 417–437 (LLTG…VMYT).

The protein belongs to the HAK/KUP transporter (TC 2.A.72) family.

It localises to the cell inner membrane. It carries out the reaction K(+)(in) + H(+)(in) = K(+)(out) + H(+)(out). Functionally, transport of potassium into the cell. Likely operates as a K(+):H(+) symporter. This chain is Probable potassium transport system protein Kup 2, found in Legionella pneumophila (strain Paris).